The sequence spans 219 residues: MQRIIIVGIDTGVGKTIVSAILARALNAEYWKPIQAGNLENSDSNIVHELSGAYCHPEAYRLHKPLSPHKAAQIDNVSIEESHICAPKTTSNLIIETSGGFLSPCTSKRLQGDVFSSWSCSWILVSQAYLGSINHTCLTVEAMRSRNLNILGMVVNGYPEDEEHWLTQEIKLPIIGTLAKEKEITKTIISCYAEQWKEVWTSNHQGIQGVSGTPSLNLH.

Residue Gly12–Ile17 participates in ATP binding. Mg(2+) is bound at residue Thr16. Lys32 is an active-site residue. Residues Asp43 and Glu96–Gly99 contribute to the ATP site. 2 residues coordinate Mg(2+): Asp43 and Glu96.

Belongs to the dethiobiotin synthetase family. In terms of assembly, homodimer. The cofactor is Mg(2+).

It is found in the cytoplasm. It catalyses the reaction (7R,8S)-7,8-diammoniononanoate + CO2 + ATP = (4R,5S)-dethiobiotin + ADP + phosphate + 3 H(+). Its pathway is cofactor biosynthesis; biotin biosynthesis; biotin from 7,8-diaminononanoate: step 1/2. Functionally, catalyzes a mechanistically unusual reaction, the ATP-dependent insertion of CO2 between the N7 and N8 nitrogen atoms of 7,8-diaminopelargonic acid (DAPA, also called 7,8-diammoniononanoate) to form a ureido ring. The protein is ATP-dependent dethiobiotin synthetase BioD of Chlamydia pneumoniae (Chlamydophila pneumoniae).